The sequence spans 949 residues: Glycine dehydrogenase (decarboxylating) (949 aa).

K700 is modified (N6-(pyridoxal phosphate)lysine).

Belongs to the GcvP family. As to quaternary structure, the glycine cleavage system is composed of four proteins: P, T, L and H. The cofactor is pyridoxal 5'-phosphate.

The enzyme catalyses N(6)-[(R)-lipoyl]-L-lysyl-[glycine-cleavage complex H protein] + glycine + H(+) = N(6)-[(R)-S(8)-aminomethyldihydrolipoyl]-L-lysyl-[glycine-cleavage complex H protein] + CO2. The glycine cleavage system catalyzes the degradation of glycine. The P protein binds the alpha-amino group of glycine through its pyridoxal phosphate cofactor; CO(2) is released and the remaining methylamine moiety is then transferred to the lipoamide cofactor of the H protein. This is Glycine dehydrogenase (decarboxylating) from Flavobacterium johnsoniae (strain ATCC 17061 / DSM 2064 / JCM 8514 / BCRC 14874 / CCUG 350202 / NBRC 14942 / NCIMB 11054 / UW101) (Cytophaga johnsonae).